Here is a 79-residue protein sequence, read N- to C-terminus: Acyl carrier protein (79 aa).

A Carrier domain is found at 2–77; the sequence is STIEERVKKI…QAIDYVKAHV (76 aa). S37 is subject to O-(pantetheine 4'-phosphoryl)serine.

It belongs to the acyl carrier protein (ACP) family. 4'-phosphopantetheine is transferred from CoA to a specific serine of apo-ACP by AcpS. This modification is essential for activity because fatty acids are bound in thioester linkage to the sulfhydryl of the prosthetic group.

It is found in the cytoplasm. It participates in lipid metabolism; fatty acid biosynthesis. Functionally, carrier of the growing fatty acid chain in fatty acid biosynthesis. The protein is Acyl carrier protein of Xanthomonas axonopodis pv. citri (strain 306).